Here is a 170-residue protein sequence, read N- to C-terminus: Keratin-associated protein 9-2 (170 aa).

A run of 17 repeats spans residues 8–12, 13–17, 18–22, 37–41, 42–46, 51–55, 61–65, 66–70, 75–79, 80–84, 85–89, 90–94, 95–99, 140–144, 145–149, 150–154, and 164–168. Residues 8-168 are 17 X 5 AA repeats of C-C-[RQVSGE]-[SPTQ]-[TASP]; the sequence is CCQPTCCRTT…TCVSSCCQPS (161 aa).

Belongs to the KRTAP type 9 family. In terms of assembly, interacts with hair keratins.

In the hair cortex, hair keratin intermediate filaments are embedded in an interfilamentous matrix, consisting of hair keratin-associated proteins (KRTAP), which are essential for the formation of a rigid and resistant hair shaft through their extensive disulfide bond cross-linking with abundant cysteine residues of hair keratins. The matrix proteins include the high-sulfur and high-glycine-tyrosine keratins. This chain is Keratin-associated protein 9-2 (KRTAP9-2), found in Pan troglodytes (Chimpanzee).